A 147-amino-acid chain; its full sequence is Sentan (147 aa).

The segment at R14–M34 is disordered. A compositionally biased stretch (polar residues) spans P25 to M34.

This sequence belongs to the S-100 family.

The protein resides in the cell projection. It localises to the cilium. In terms of biological role, may be a component of the linker structure that bridges the ciliary membrane and peripheral singlet microtubules. This chain is Sentan (SNTN), found in Bos taurus (Bovine).